Here is a 418-residue protein sequence, read N- to C-terminus: Adenylosuccinate synthetase 2 (418 aa).

GTP contacts are provided by residues 12 to 18 and 40 to 42; these read GDEGKGR and GHT. Aspartate 13 functions as the Proton acceptor in the catalytic mechanism. Aspartate 13 and glycine 40 together coordinate Mg(2+). Residues 13–16, 38–41, threonine 127, lysine 141, threonine 239, and arginine 301 each bind IMP; these read DEGK and NAGH. The Proton donor role is filled by histidine 41. Residue 297–303 participates in substrate binding; the sequence is AVTGRPR. GTP contacts are provided by residues arginine 303, 329-331, and 407-409; these read KID and SVG.

The protein belongs to the adenylosuccinate synthetase family. In terms of assembly, homodimer. Mg(2+) is required as a cofactor.

It localises to the cytoplasm. It carries out the reaction IMP + L-aspartate + GTP = N(6)-(1,2-dicarboxyethyl)-AMP + GDP + phosphate + 2 H(+). It participates in purine metabolism; AMP biosynthesis via de novo pathway; AMP from IMP: step 1/2. Its function is as follows. Plays an important role in the de novo pathway of purine nucleotide biosynthesis. Catalyzes the first committed step in the biosynthesis of AMP from IMP. The chain is Adenylosuccinate synthetase 2 from Pseudoalteromonas translucida (strain TAC 125).